A 247-amino-acid chain; its full sequence is Uridylate kinase (247 aa).

Residue 11-14 (KASG) coordinates ATP. Residues 19-24 (GKQGFG) are involved in allosteric activation by GTP. Position 53 (glycine 53) interacts with UMP. Glycine 54 and arginine 58 together coordinate ATP. UMP-binding positions include aspartate 73 and 134-141 (TGNPFFTT). ATP is bound by residues threonine 161, glutamine 162, tyrosine 167, and aspartate 170.

Belongs to the UMP kinase family. Homohexamer.

It localises to the cytoplasm. It carries out the reaction UMP + ATP = UDP + ADP. It participates in pyrimidine metabolism; CTP biosynthesis via de novo pathway; UDP from UMP (UMPK route): step 1/1. With respect to regulation, allosterically activated by GTP. Inhibited by UTP. Catalyzes the reversible phosphorylation of UMP to UDP. This Chelativorans sp. (strain BNC1) protein is Uridylate kinase.